The chain runs to 357 residues: Probable cinnamyl alcohol dehydrogenase 2 (357 aa).

Cys-47 provides a ligand contact to Zn(2+). Residue Ser-49 coordinates NADP(+). Residues His-69, Glu-70, Cys-100, Cys-103, Cys-106, Cys-114, and Cys-163 each contribute to the Zn(2+) site. NADP(+)-binding positions include Thr-167, 188-193 (GLGGVG), 211-216 (SSSDKK), Thr-251, Gly-275, and 298-300 (SFI).

This sequence belongs to the zinc-containing alcohol dehydrogenase family. In terms of assembly, homodimer. It depends on Zn(2+) as a cofactor.

It catalyses the reaction (E)-cinnamyl alcohol + NADP(+) = (E)-cinnamaldehyde + NADPH + H(+). It carries out the reaction (E)-coniferol + NADP(+) = (E)-coniferaldehyde + NADPH + H(+). The catalysed reaction is (E)-sinapyl alcohol + NADP(+) = (E)-sinapaldehyde + NADPH + H(+). The enzyme catalyses (E)-4-coumaroyl alcohol + NADP(+) = (E)-4-coumaraldehyde + NADPH + H(+). It catalyses the reaction (E)-caffeyl alcohol + NADP(+) = (E)-caffeyl aldehyde + NADPH + H(+). The protein operates within aromatic compound metabolism; phenylpropanoid biosynthesis. In terms of biological role, involved in lignin biosynthesis. Catalyzes the final step specific for the production of lignin monomers. Catalyzes the NADPH-dependent reduction of coniferaldehyde, 5-hydroxyconiferaldehyde, sinapaldehyde, 4-coumaraldehyde and caffeyl aldehyde to their respective alcohols. The protein is Probable cinnamyl alcohol dehydrogenase 2 (CAD2) of Picea abies (Norway spruce).